The primary structure comprises 194 residues: Large ribosomal subunit protein bL25 (194 aa).

This sequence belongs to the bacterial ribosomal protein bL25 family. CTC subfamily. In terms of assembly, part of the 50S ribosomal subunit; part of the 5S rRNA/L5/L18/L25 subcomplex. Contacts the 5S rRNA. Binds to the 5S rRNA independently of L5 and L18.

This is one of the proteins that binds to the 5S RNA in the ribosome where it forms part of the central protuberance. The chain is Large ribosomal subunit protein bL25 from Geotalea uraniireducens (strain Rf4) (Geobacter uraniireducens).